Consider the following 235-residue polypeptide: Large ribosomal subunit protein bL25 (235 aa).

Disordered regions lie at residues 1–21 and 210–235; these read MADN…PARR and APAA…GAKK. Residues 210–222 are compositionally biased toward low complexity; it reads APAAGAAPAAGGE. Positions 223 to 235 are enriched in basic and acidic residues; the sequence is AAKKAPEAKGAKK.

Belongs to the bacterial ribosomal protein bL25 family. CTC subfamily. In terms of assembly, part of the 50S ribosomal subunit; part of the 5S rRNA/L5/L18/L25 subcomplex. Contacts the 5S rRNA. Binds to the 5S rRNA independently of L5 and L18.

This is one of the proteins that binds to the 5S RNA in the ribosome where it forms part of the central protuberance. This chain is Large ribosomal subunit protein bL25, found in Anaeromyxobacter sp. (strain Fw109-5).